The chain runs to 152 residues: Transcriptional regulator MraZ (152 aa).

2 SpoVT-AbrB domains span residues 5–52 (ASAI…PIHE) and 81–124 (AHEV…DEQA).

This sequence belongs to the MraZ family. As to quaternary structure, forms oligomers.

Its subcellular location is the cytoplasm. The protein localises to the nucleoid. In Shewanella oneidensis (strain ATCC 700550 / JCM 31522 / CIP 106686 / LMG 19005 / NCIMB 14063 / MR-1), this protein is Transcriptional regulator MraZ.